A 644-amino-acid polypeptide reads, in one-letter code: Zinc finger protein 568 (644 aa).

One can recognise a KRAB domain in the interval 48–119 (VTFKDVAVDL…EEEMFGRHCP (72 aa)). 15 C2H2-type zinc fingers span residues 222-244 (FKCNQCGQDFSHKFDLIRHERIH), 250-272 (YECKECGKAFSRKENLITHQKIH), 278-300 (YKCNECGKAFIQMSNLIRHHRIH), 306-328 (YACKDCWKAFSQKSNLIEHERIH), 334-356 (YECKECGKSFSQKQNLIEHEKIH), 362-384 (YACNECGRAFSRMSSVTLHMRSH), 390-412 (YKCNKCGKAFSQCSVFIIHMRSH), 418-440 (YVCSECGKAFSQSSSLTVHMRNH), 446-468 (YECKECGKAFSRKENLITHQKIH), 474-496 (YECSECGKAFIQMSNLIRHQRIH), 502-524 (YACTVCGKAFSQKSNLTEHEKIH), 530-552 (YHCNQCGKAFSQRQNLLEHEKIH), 558-580 (FKCNECGKAFSRISSLTLHVRSH), 586-608 (YECNKCGKAFSQCSLLIIHMRSH), and 614-636 (FECNECGKAFSQRASLSIHKRGH).

This sequence belongs to the krueppel C2H2-type zinc-finger protein family. As to quaternary structure, interacts with TRIM28.

It is found in the nucleus. In terms of biological role, has transcriptional repression activity, partially through the recruitment of the corepressor TRIM28 but also has repression activity independently of this interaction. Essential during embryonic development, where it acts as a direct repressor of a placental-specific transcript of IGF2 in early development and regulates convergent extension movements required for axis elongation and tissue morphogenesis in all germ layers. Also important for normal morphogenesis of extraembryonic tissues including the yolk sac, extraembryonic mesoderm and placenta. May enhance proliferation or maintenance of neural stem cells. The protein is Zinc finger protein 568 (ZNF568) of Homo sapiens (Human).